We begin with the raw amino-acid sequence, 116 residues long: Small ribosomal subunit protein uS13m (116 aa).

Belongs to the universal ribosomal protein uS13 family. Part of the small ribosomal subunit.

Its subcellular location is the mitochondrion. Functionally, located at the top of the head of the small subunit, it contacts several helices of the 18S rRNA. The polypeptide is Small ribosomal subunit protein uS13m (RPS13) (Daucus carota (Wild carrot)).